A 565-amino-acid polypeptide reads, in one-letter code: Galactoside 2-alpha-L-fucosyltransferase (565 aa).

Residues 1 to 43 (MNMLIKRVIAIKNPRGDDNNNNKLSDLETLTDKCTTCPLTLMR) are Cytoplasmic-facing. The helical; Signal-anchor for type II membrane protein transmembrane segment at 44-64 (VMAFFVVSFMLFSVLFSLSVV) threads the bilayer. The Lumenal portion of the chain corresponds to 65 to 565 (LRDPPSDAAI…MSWGLKLVDN (501 aa)). N-linked (GlcNAc...) asparagine glycans are attached at residues N159, N263, N407, and N509.

It belongs to the glycosyltransferase 37 family.

The protein localises to the golgi apparatus. It is found in the golgi stack membrane. Its pathway is protein modification; protein glycosylation. Functionally, involved in cell wall biosynthesis. Adds the terminal fucosyl residue on xyloglucan side chains. This is Galactoside 2-alpha-L-fucosyltransferase (FT1) from Pisum sativum (Garden pea).